Consider the following 311-residue polypeptide: Solute carrier family 25 member 36-A (311 aa).

Solcar repeat units lie at residues 4–108, 116–203, and 224–308; these read RDTL…SKEK, DSTQ…IKRK, and SDFV…VVYL. A run of 6 helical transmembrane segments spans residues 7–27, 41–57, 111–131, 180–200, 226–246, and 291–311; these read LVHLFAGGCGGTVGAILTCPL, FYISEVQLSTVNGASVA, NVFDPDSTQVHMLSAGLAGFT, MSASYAGISETVIHFVIYESI, FVGMMLAAATSKTCATSIAYP, and QIPNTAIMMCTYELVVYLLNG.

This sequence belongs to the mitochondrial carrier (TC 2.A.29) family.

Its subcellular location is the mitochondrion inner membrane. This is Solute carrier family 25 member 36-A (slc25a36a) from Danio rerio (Zebrafish).